We begin with the raw amino-acid sequence, 268 residues long: Protein MGF 300-1L (268 aa).

At 1-175 (MVSLTTCCLK…QTFKTFYAKN (175 aa)) the chain is on the cytoplasmic side. The helical transmembrane segment at 176 to 193 (YSLSTLYCIFLAIYYKLY) threads the bilayer. The Extracellular segment spans residues 194–268 (TALRKMVKIY…MYAFSQNDYW (75 aa)). N-linked (GlcNAc...) asparagine; by host glycosylation is present at N227.

The protein belongs to the asfivirus MGF 300 family.

It is found in the host membrane. Plays a role in virus cell tropism, and may be required for efficient virus replication in macrophages. This is Protein MGF 300-1L from African swine fever virus (strain Badajoz 1971 Vero-adapted) (Ba71V).